The following is a 1009-amino-acid chain: Protein naked cuticle (1009 aa).

2 stretches are compositionally biased toward polar residues: residues 68–83 (IITTPPGNASGSASNK) and 121–130 (LPQDMSSSGS). A disordered region spans residues 68 to 166 (IITTPPGNAS…QQQTAAAATG (99 aa)). Residues 152-166 (QQQQQQQQTAAAATG) show a composition bias toward low complexity. The interaction with dsh stretch occupies residues 206-282 (EFTCDVSVEG…TVSPEGKSKS (77 aa)). Residues 217–253 (KSSQPLQFSFTFYDLDGHHGKITKDDIVGIVYTIYES) form the EF-hand domain. Disordered stretches follow at residues 328-433 (MSKQ…QQQL), 456-479 (AGNEATVPDCPSSHRQLHHQRQQD), and 515-580 (GNDS…QQQR). Basic residues predominate over residues 349–359 (RRQHRYRPRKL). Over residues 370 to 387 (NSEKEKERERERERESHA) the composition is skewed to basic and acidic residues. Residues 403 to 414 (KSHHHHHHHGRY) show a composition bias toward basic residues. The span at 515 to 525 (GNDSGNWQNRH) shows a compositional bias: polar residues. Low complexity-rich tracts occupy residues 526–535 (LQQSLQQQPQ) and 570–580 (HQQLQQQQQQR). Positions 584 to 613 (ECWKSALNRNDLISIIRESMEKNRLCFQLN) are required for nuclear localization and inhibition of Wnt signaling. 4 disordered regions span residues 619–662 (NVSP…SPLS), 773–799 (SAAHSPPPTPSNVATVQPIPKKSHNQK), 835–899 (LQQK…SAGS), and 955–982 (TESGGKQQQQQALEADEGQEQEVELDTS). Low complexity-rich tracts occupy residues 624-638 (RQPAAQQQQQQQRQR) and 653-662 (SPAAPQSPLS). The span at 843-857 (RRHRHKQQQQQHHHQ) shows a compositional bias: basic residues. The segment covering 858–875 (QQQQQQQQQNQQQQQQQQ) has biased composition (low complexity). Residues 968-979 (EADEGQEQEVEL) are compositionally biased toward acidic residues.

The protein belongs to the NKD family. In terms of assembly, interacts with dsh.

The protein localises to the cell membrane. Its subcellular location is the cytoplasm. The protein resides in the nucleus. Cell autonomous antagonist of the canonical Wnt signaling pathway. May activate a second Wnt signaling pathway that controls planar cell polarity. Required for neuroblast specification. In Drosophila pseudoobscura pseudoobscura (Fruit fly), this protein is Protein naked cuticle.